Consider the following 213-residue polypeptide: High frequency lysogenization protein HflD homolog (213 aa).

The protein belongs to the HflD family.

Its subcellular location is the cytoplasm. It is found in the cell inner membrane. The sequence is that of High frequency lysogenization protein HflD homolog from Klebsiella pneumoniae (strain 342).